The primary structure comprises 403 residues: Conserved oligomeric Golgi complex subunit 5 (403 aa).

It belongs to the COG5 family. Component of the conserved oligomeric Golgi (COG or Sec34/Sec35) complex which consists of eight different proteins COG1-COG8.

It localises to the golgi apparatus membrane. Acts as a component of the peripheral membrane COG complex that is involved in intra-Golgi protein trafficking. COG is located at the cis-Golgi, and regulates tethering of retrograde intra-Golgi vesicles and possibly a number of other membrane trafficking events. This is Conserved oligomeric Golgi complex subunit 5 (COG5) from Saccharomyces cerevisiae (strain ATCC 204508 / S288c) (Baker's yeast).